A 367-amino-acid polypeptide reads, in one-letter code: Peptide chain release factor 2 (367 aa).

At glutamine 254 the chain carries N5-methylglutamine.

The protein belongs to the prokaryotic/mitochondrial release factor family. Methylated by PrmC. Methylation increases the termination efficiency of RF2.

Its subcellular location is the cytoplasm. Peptide chain release factor 2 directs the termination of translation in response to the peptide chain termination codons UGA and UAA. The polypeptide is Peptide chain release factor 2 (Neisseria meningitidis serogroup A / serotype 4A (strain DSM 15465 / Z2491)).